A 387-amino-acid chain; its full sequence is Probable protein phosphatase 2C 25 (387 aa).

In terms of domain architecture, PPM-type phosphatase spans 52–351 (EFSFAVVQAN…DDITVVVVYI (300 aa)). Mn(2+) contacts are provided by aspartate 83, glycine 84, aspartate 283, and aspartate 342.

This sequence belongs to the PP2C family. It depends on Mg(2+) as a cofactor. Mn(2+) serves as cofactor.

It carries out the reaction O-phospho-L-seryl-[protein] + H2O = L-seryl-[protein] + phosphate. The enzyme catalyses O-phospho-L-threonyl-[protein] + H2O = L-threonyl-[protein] + phosphate. The chain is Probable protein phosphatase 2C 25 from Oryza sativa subsp. japonica (Rice).